Consider the following 114-residue polypeptide: Histone H2B (114 aa).

The tract at residues 1-22 (MAKTPSKKAAKAPKKAGSKRNK) is disordered. N6-acetyllysine is present on K3. A Glycyl lysine isopeptide (Lys-Gly) (interchain with G-Cter in ubiquitin) cross-link involves residue K110.

This sequence belongs to the histone H2B family. In terms of assembly, the nucleosome is a histone octamer containing two molecules each of H2A, H2B, H3 and H4 assembled in one H3-H4 heterotetramer and two H2A-H2B heterodimers. The octamer wraps approximately 147 bp of DNA. Monoubiquitination of Lys-110 gives a specific tag for epigenetic transcriptional activation and is also prerequisite for histone H3 'Lys-4' and 'Lys-79' methylation.

It is found in the nucleus. Its subcellular location is the chromosome. Functionally, core component of nucleosome. Nucleosomes wrap and compact DNA into chromatin, limiting DNA accessibility to the cellular machineries which require DNA as a template. Histones thereby play a central role in transcription regulation, DNA repair, DNA replication and chromosomal stability. DNA accessibility is regulated via a complex set of post-translational modifications of histones, also called histone code, and nucleosome remodeling. This Olisthodiscus luteus (Marine phytoflagellate) protein is Histone H2B.